The primary structure comprises 380 residues: Type 4 apparatus protein DotM (380 aa).

2 helical membrane-spanning segments follow: residues 18–38 (MAPVWIVILLFITAYFVWALA) and 99–119 (YPVICILVVLAFVLYNSNVTL).

In terms of assembly, the T4BSS is a complex nanomachine composed of several subcomplexes. This subunit is part of the Type IV Coupling Complex (T4CC), a subcomplex composed of the DotLMNYZ core and the IcmSW-LvgA adapter subunits, linked by the C-terminal tail of DotL. Six DotLMNYZ hetero-pentameric units may assemble into a hexameric nanomachine, forming an inner membrane channel for effectors to pass through. Interacts directly with DotL.

It is found in the cell inner membrane. In terms of biological role, component of the Dot/Icm type IVB secretion system (T4BSS), which is used to inject bacterial effector proteins into eukaryotic host cells. Part of a subcomplex which recruits effector proteins and delivers them to the core transmembrane subcomplex. Forms the interacting surface for recruitment of acidic Glu-rich motif-containing effectors. This Legionella pneumophila subsp. pneumophila (strain Philadelphia 1 / ATCC 33152 / DSM 7513) protein is Type 4 apparatus protein DotM.